A 422-amino-acid chain; its full sequence is Cytochrome P450-pinF1, plant-inducible (422 aa).

Cysteine 369 lines the heme pocket.

It belongs to the cytochrome P450 family. Heme serves as cofactor.

Its function is as follows. Not essential for virulence, but may be involved in the detoxification of plant protective agents at the site of wounding. This is Cytochrome P450-pinF1, plant-inducible (cyp103) from Rhizobium radiobacter (Agrobacterium tumefaciens).